A 329-amino-acid polypeptide reads, in one-letter code: DNA polymerase III subunit delta' (329 aa).

As to quaternary structure, component of the DNA clamp loading complex consisting of tau(3):delta(1):delta'(1). The DNA polymerase III holoenzyme complex contains at least 10 different subunits organized into 3 functionally essential subassemblies: the Pol III core, the beta sliding clamp processivity factor and the clamp-loading complex. The Pol III core (subunits alpha, epsilon and theta) contains the polymerase and the 3'-5' exonuclease proofreading activities. The polymerase is tethered to the template via the dimeric beta sliding clamp processivity factor. The DNA clamp-loading complex assembles the beta sliding clamp onto the primed template and plays a central role in the organization and communication at the replication fork.

The protein resides in the cytoplasm. Its subcellular location is the nucleoid. It carries out the reaction DNA(n) + a 2'-deoxyribonucleoside 5'-triphosphate = DNA(n+1) + diphosphate. Functionally, DNA polymerase III is a complex, multichain enzyme responsible for most of the replicative synthesis in bacteria. This Bacillus subtilis (strain 168) protein is DNA polymerase III subunit delta' (holB).